The chain runs to 316 residues: Glutamyl endopeptidase (316 aa).

An N-terminal signal peptide occupies residues 1–30; sequence MVSKKSVKRGLITGLIGISIYSLGMHPAQA. A propeptide spanning residues 31 to 94 is cleaved from the precursor; the sequence is APSPHTPVSS…SPAKAPYSIK (64 aa). C126 and C142 are disulfide-bonded. Catalysis depends on charge relay system residues H141 and S261. An intrachain disulfide couples C275 to C279.

This sequence belongs to the peptidase S1B family.

It is found in the secreted. It carries out the reaction Preferential cleavage: Glu-|-Xaa, Asp-|-Xaa.. Specific for hydrolysis of peptide bonds on the carboxyl side of acidic amino acid residues, with a strong preference for Glu. This chain is Glutamyl endopeptidase (blaSE), found in Bacillus licheniformis (strain ATCC 14580 / DSM 13 / JCM 2505 / CCUG 7422 / NBRC 12200 / NCIMB 9375 / NCTC 10341 / NRRL NRS-1264 / Gibson 46).